The primary structure comprises 163 residues: Nucleotide-binding protein Dvul_1191 (163 aa).

This sequence belongs to the YajQ family.

Nucleotide-binding protein. This Nitratidesulfovibrio vulgaris (strain DP4) (Desulfovibrio vulgaris) protein is Nucleotide-binding protein Dvul_1191.